The chain runs to 123 residues: Putative iron-sulfur cluster insertion protein ErpA (123 aa).

Iron-sulfur cluster is bound by residues C51, C115, and C117.

Belongs to the HesB/IscA family. In terms of assembly, homodimer. The cofactor is iron-sulfur cluster.

Functionally, required for insertion of 4Fe-4S clusters. The protein is Putative iron-sulfur cluster insertion protein ErpA of Burkholderia multivorans (strain ATCC 17616 / 249).